We begin with the raw amino-acid sequence, 187 residues long: Ribosome maturation factor RimM (187 aa).

Residues 94–168 (DDEFYHADLV…RVIVDMPDGL (75 aa)) form the PRC barrel domain. The disordered stretch occupies residues 167–187 (GLIGGDKPDTSDTAPLGQDFD).

Belongs to the RimM family. In terms of assembly, binds ribosomal protein uS19.

The protein resides in the cytoplasm. An accessory protein needed during the final step in the assembly of 30S ribosomal subunit, possibly for assembly of the head region. Essential for efficient processing of 16S rRNA. May be needed both before and after RbfA during the maturation of 16S rRNA. It has affinity for free ribosomal 30S subunits but not for 70S ribosomes. The protein is Ribosome maturation factor RimM of Jannaschia sp. (strain CCS1).